We begin with the raw amino-acid sequence, 118 residues long: Large ribosomal subunit protein uL22 (118 aa).

Belongs to the universal ribosomal protein uL22 family. Part of the 50S ribosomal subunit.

In terms of biological role, this protein binds specifically to 23S rRNA; its binding is stimulated by other ribosomal proteins, e.g. L4, L17, and L20. It is important during the early stages of 50S assembly. It makes multiple contacts with different domains of the 23S rRNA in the assembled 50S subunit and ribosome. The globular domain of the protein is located near the polypeptide exit tunnel on the outside of the subunit, while an extended beta-hairpin is found that lines the wall of the exit tunnel in the center of the 70S ribosome. The polypeptide is Large ribosomal subunit protein uL22 (Nostoc punctiforme (strain ATCC 29133 / PCC 73102)).